Here is a 478-residue protein sequence, read N- to C-terminus: Protein trichome birefringence-like 20 (478 aa).

Residues 10–30 (IGLVIFPLILLTIAPILYLFF) form a helical; Signal-anchor for type II membrane protein membrane-spanning segment. The segment covering 50 to 68 (SSAISSPSRYNHSSSSSDS) has biased composition (low complexity). A disordered region spans residues 50-125 (SSAISSPSRY…KEHRRKKRKR (76 aa)). The segment covering 92–110 (SSSLHNNDRLSISSSNGHH) has biased composition (polar residues). Over residues 112 to 125 (VTPKKEHRRKKRKR) the composition is skewed to basic residues. Residues 200–202 (GDS) carry the GDS motif motif. The short motif at 447 to 461 (DCVHWCLPGPIDSWN) is the DCXHWCLPGXXDXWN motif element.

The protein belongs to the PC-esterase family. TBL subfamily.

The protein localises to the membrane. Functionally, may act as a bridging protein that binds pectin and other cell wall polysaccharides. Probably involved in maintaining esterification of pectins. May be involved in the specific O-acetylation of cell wall polymers. This is Protein trichome birefringence-like 20 (TBL20) from Arabidopsis thaliana (Mouse-ear cress).